A 552-amino-acid chain; its full sequence is Keratin, type II cytoskeletal 6A (552 aa).

Residues 1–14 show a composition bias toward polar residues; that stretch reads MSTKTVIRSQTSHR. Positions 1–21 are disordered; it reads MSTKTVIRSQTSHRGFSAGSA. Positions 1–151 are head; that stretch reads MSTKTVIRSQ…DPTIQRVRTE (151 aa). The coil 1A stretch occupies residues 152–187; the sequence is EREQIKTLNNKFASFIDKVRFLEQQNKVLDTKWALL. The IF rod domain maps to 152 to 465; that stretch reads EREQIKTLNN…TLLEGEECRL (314 aa). The segment at 188-206 is linker 1; that stretch reads QEQGTKTVRQGLETLFEQY. The segment at 207 to 298 is coil 1B; it reads INDLRKELDN…ALYEAELSQM (92 aa). The interval 299–322 is linker 12; it reads QTHISDTSVVLSMDNNRSLDLDSI. Positions 323-461 are coil 2; that stretch reads IAEVKAQYEE…ATYRTLLEGE (139 aa). The interval 462–552 is tail; that stretch reads ECRLNGEGVG…TSSTRKSYRP (91 aa). Residues 524–552 are disordered; sequence ISSGLSSSGGSSSTIKYTTTSSTRKSYRP. Residues 525-552 show a composition bias toward low complexity; sequence SSGLSSSGGSSSTIKYTTTSSTRKSYRP.

The protein belongs to the intermediate filament family. As to quaternary structure, heterodimer of a type I and a type II keratin. KRT6 isomers associate with KRT16 and/or KRT17. Interacts with TCHP.

Epidermis-specific type I keratin involved in wound healing. Involved in the activation of follicular keratinocytes after wounding, while it does not play a major role in keratinocyte proliferation or migration. Participates in the regulation of epithelial migration by inhibiting the activity of SRC during wound repair. The sequence is that of Keratin, type II cytoskeletal 6A (Krt6a) from Rattus norvegicus (Rat).